A 473-amino-acid polypeptide reads, in one-letter code: BTB/POZ domain-containing protein KCTD8 (473 aa).

The disordered stretch occupies residues 1-36 (MALKDTGSGGSTILPISEMVSSSSSPGASAAAAPGP). Over residues 21-35 (SSSSSPGASAAAAPG) the composition is skewed to low complexity. The region spanning 44–122 (EVVELNVGGQ…LRDKQLALPE (79 aa)) is the BTB domain. Serine 78 carries the post-translational modification Phosphoserine. Residue arginine 80 is modified to Omega-N-methylarginine. The disordered stretch occupies residues 326–409 (IVSPKQEHED…WIPPPDKRRN (84 aa)). Positions 330–346 (KQEHEDRKHDKVTDKGS) are enriched in basic and acidic residues. A compositionally biased stretch (polar residues) spans 347-388 (ESGTSCNELSTSSCDSHSEASTPQDNPSSAQQATAHQPNTLT). Serine 410 is subject to Phosphoserine.

As to quaternary structure, interacts as a tetramer with GABRB1 and GABRB2.

Its subcellular location is the presynaptic cell membrane. The protein resides in the postsynaptic cell membrane. Functionally, auxiliary subunit of GABA-B receptors that determine the pharmacology and kinetics of the receptor response. Increases agonist potency and markedly alter the G-protein signaling of the receptors by accelerating onset and promoting desensitization. In Homo sapiens (Human), this protein is BTB/POZ domain-containing protein KCTD8 (KCTD8).